Reading from the N-terminus, the 358-residue chain is NAC domain-containing protein 12 (358 aa).

In terms of domain architecture, NAC spans 16-177; sequence VPPGFRFHPT…GWVVCRVFRK (162 aa). A DNA-binding region spans residues 116–183; it reads IGLRKTLVFY…VFRKKNYQKI (68 aa).

In terms of tissue distribution, stems and roots, specifically in interfascicular fibers (sclerenchyma), cells differentiating into vascular vessels (cambium), and xylem.

It is found in the nucleus. In terms of biological role, transcriptional activator of genes involved in biosynthesis of secondary walls. Together with NST1, required for the secondary cell wall thickening and lignification of sclerenchymatous fibers and secondary xylem vessels (tracheary elements). Seems to repress the secondary cell wall thickening of xylary fibers. May also regulate the secondary cell wall lignification of other tissues. Binds to and activates the promoter of MYB46. The chain is NAC domain-containing protein 12 from Arabidopsis thaliana (Mouse-ear cress).